The chain runs to 541 residues: Propionyl-CoA carboxylase beta chain, mitochondrial (541 aa).

The transit peptide at 1-28 directs the protein to the mitochondrion; that stretch reads MAAVIRIRAMAAGTRLRVLNCGLGTTIR. One can recognise a CoA carboxyltransferase N-terminal domain in the interval 34 to 292; sequence PVSVNERIEN…SNQDPASIRE (259 aa). The interval 34–535 is carboxyltransferase; the sequence is PVSVNERIEN…SKKVHRPWRK (502 aa). A Phosphoserine modification is found at Ser-73. Position 101 is an N6-acetyllysine; alternate (Lys-101). Lys-101 carries the N6-succinyllysine; alternate modification. The residue at position 250 (Lys-250) is an N6-succinyllysine. The region spanning 296 to 535 is the CoA carboxyltransferase C-terminal domain; sequence PSDRLVPELD…SKKVHRPWRK (240 aa). An acyl-CoA binding region spans residues 327 to 360; the sequence is DEREFFEIMPNYAKNIVIGFARMNGRTVGIVGNQ. N6-acetyllysine; alternate occurs at positions 476 and 491. Lys-476 and Lys-491 each carry N6-succinyllysine; alternate.

It belongs to the AccD/PCCB family. In terms of assembly, the holoenzyme is a dodecamer composed of 6 PCCA/alpha subunits and 6 PCCB/beta subunits.

Its subcellular location is the mitochondrion matrix. The enzyme catalyses propanoyl-CoA + hydrogencarbonate + ATP = (S)-methylmalonyl-CoA + ADP + phosphate + H(+). It carries out the reaction butanoyl-CoA + hydrogencarbonate + ATP = (2S)-ethylmalonyl-CoA + ADP + phosphate + H(+). It functions in the pathway metabolic intermediate metabolism; propanoyl-CoA degradation; succinyl-CoA from propanoyl-CoA: step 1/3. This is one of the 2 subunits of the biotin-dependent propionyl-CoA carboxylase (PCC), a mitochondrial enzyme involved in the catabolism of odd chain fatty acids, branched-chain amino acids isoleucine, threonine, methionine, and valine and other metabolites. Propionyl-CoA carboxylase catalyzes the carboxylation of propionyl-CoA/propanoyl-CoA to D-methylmalonyl-CoA/(S)-methylmalonyl-CoA. Within the holoenzyme, the alpha subunit catalyzes the ATP-dependent carboxylation of the biotin carried by the biotin carboxyl carrier (BCC) domain, while the beta subunit then transfers the carboxyl group from carboxylated biotin to propionyl-CoA. Propionyl-CoA carboxylase also significantly acts on butyryl-CoA/butanoyl-CoA, which is converted to ethylmalonyl-CoA/(2S)-ethylmalonyl-CoA. Other alternative minor substrates include (2E)-butenoyl-CoA/crotonoyl-CoA. The protein is Propionyl-CoA carboxylase beta chain, mitochondrial of Rattus norvegicus (Rat).